The primary structure comprises 505 residues: Elsinochrome transporter 1 (505 aa).

Over residues 1 to 10 (MALSGLGSGP) the composition is skewed to gly residues. Positions 1–25 (MALSGLGSGPEGNPNNHQGKAIPTL) are disordered. A helical transmembrane segment spans residues 35 to 55 (FLFSWVSFLVPFWSWYPFSPL). Residues N64 and N80 are each glycosylated (N-linked (GlcNAc...) asparagine). A disordered region spans residues 221–295 (DTPTGAGKPP…TEKGESLPLT (75 aa)). A compositionally biased stretch (low complexity) spans 255–267 (TPSSPDRSSSTNS). 6 helical membrane-spanning segments follow: residues 313–333 (VIFSGPTLVLGACYFCTFGAE), 348–368 (LGLGLQNAGNLAAIFGLLNIV), 391–411 (KALLHTYCVMTGVFCIAIGLA), 417–437 (ATLVGLVSGGLAFFLEGANGL), 449–469 (VVSGFTGACGNLGGIVFAIVF), and 479–499 (VFWIIGAIIIGLQVATCWIKP).

The protein belongs to the major facilitator superfamily. Nitrate/nitrite porter (TC 2.A.1.8) family.

It is found in the cell membrane. Its function is as follows. Major facilitator-type transporter; part of the gene cluster that mediates the biosynthesis of elsinochromes, pigments consisting of at least four interconvertible tautomers (A, B, C and D) that have a core phenolic quinone to which various side chains are attached and which play an important role in fungal pathogenesis. Once elsinochrome is synthesized, it must be exported outside the fungal cells, which is probably accomplished by the ECT1 transporter, to avoid toxicity. The protein is Elsinochrome transporter 1 of Elsinoe fawcettii (Citrus scab fungus).